The following is a 280-amino-acid chain: Nitrogenase iron protein (280 aa).

8 to 15 contributes to the ATP binding site; sequence GKGGIGKS. Cysteine 95 is a binding site for [4Fe-4S] cluster. ADP-ribosylarginine; by dinitrogenase reductase ADP-ribosyltransferase is present on arginine 98. Cysteine 128 is a [4Fe-4S] cluster binding site.

Belongs to the NifH/BchL/ChlL family. In terms of assembly, homodimer. Requires [4Fe-4S] cluster as cofactor. Post-translationally, the reversible ADP-ribosylation of Arg-98 inactivates the nitrogenase reductase and regulates nitrogenase activity.

The catalysed reaction is N2 + 8 reduced [2Fe-2S]-[ferredoxin] + 16 ATP + 16 H2O = H2 + 8 oxidized [2Fe-2S]-[ferredoxin] + 2 NH4(+) + 16 ADP + 16 phosphate + 6 H(+). The key enzymatic reactions in nitrogen fixation are catalyzed by the nitrogenase complex, which has 2 components: the iron protein and the molybdenum-iron protein. This is Nitrogenase iron protein from Methanospirillum hungatei JF-1 (strain ATCC 27890 / DSM 864 / NBRC 100397 / JF-1).